Here is a 648-residue protein sequence, read N- to C-terminus: Macrolide export ATP-binding/permease protein MacB (648 aa).

In terms of domain architecture, ABC transporter spans 5 to 243; it reads LELKDIRRSY…TGGTEPVVNT (239 aa). 41-48 provides a ligand contact to ATP; that stretch reads GASGSGKS. The next 4 helical transmembrane spans lie at 273 to 293, 523 to 543, 576 to 596, and 611 to 631; these read LLTMLGIIIGIASVVSIVVVG, LFLTLVAVISLVVGGIGVMNI, AVLVCLVGGALGITLSLLIAF, and PLALLLAFLCSTVTGILFGWL.

It belongs to the ABC transporter superfamily. Macrolide exporter (TC 3.A.1.122) family. In terms of assembly, homodimer. Part of the tripartite efflux system MacAB-TolC, which is composed of an inner membrane transporter, MacB, a periplasmic membrane fusion protein, MacA, and an outer membrane component, TolC. The complex forms a large protein conduit and can translocate molecules across both the inner and outer membranes. Interacts with MacA.

It localises to the cell inner membrane. Functionally, part of the tripartite efflux system MacAB-TolC. MacB is a non-canonical ABC transporter that contains transmembrane domains (TMD), which form a pore in the inner membrane, and an ATP-binding domain (NBD), which is responsible for energy generation. Confers resistance against macrolides. The sequence is that of Macrolide export ATP-binding/permease protein MacB from Escherichia coli (strain UTI89 / UPEC).